The sequence spans 158 residues: Disease resistance response protein DRRG49-C (158 aa).

The protein belongs to the BetVI family.

The sequence is that of Disease resistance response protein DRRG49-C from Pisum sativum (Garden pea).